The chain runs to 513 residues: Cytochrome P450 1A2 (513 aa).

Serine 68 carries O-linked (GlcNAc) serine glycosylation. Cysteine 456 contacts heme.

It belongs to the cytochrome P450 family. Interacts with PGRMC1; the interaction requires PGRMC1 homodimerization. Heme serves as cofactor.

Its subcellular location is the endoplasmic reticulum membrane. The protein localises to the microsome membrane. It carries out the reaction an organic molecule + reduced [NADPH--hemoprotein reductase] + O2 = an alcohol + oxidized [NADPH--hemoprotein reductase] + H2O + H(+). The enzyme catalyses 17beta-estradiol + reduced [NADPH--hemoprotein reductase] + O2 = 2-hydroxy-17beta-estradiol + oxidized [NADPH--hemoprotein reductase] + H2O + H(+). The catalysed reaction is 17beta-estradiol + reduced [NADPH--hemoprotein reductase] + O2 = 4-hydroxy-17beta-estradiol + oxidized [NADPH--hemoprotein reductase] + H2O + H(+). It catalyses the reaction estrone + reduced [NADPH--hemoprotein reductase] + O2 = 2-hydroxyestrone + oxidized [NADPH--hemoprotein reductase] + H2O + H(+). It carries out the reaction estrone + reduced [NADPH--hemoprotein reductase] + O2 = 4-hydroxyestrone + oxidized [NADPH--hemoprotein reductase] + H2O + H(+). The enzyme catalyses cholesterol + reduced [NADPH--hemoprotein reductase] + O2 = 25-hydroxycholesterol + oxidized [NADPH--hemoprotein reductase] + H2O + H(+). The catalysed reaction is all-trans-retinol + reduced [NADPH--hemoprotein reductase] + O2 = all-trans-retinal + oxidized [NADPH--hemoprotein reductase] + 2 H2O + H(+). It catalyses the reaction all-trans-retinal + reduced [NADPH--hemoprotein reductase] + O2 = all-trans-retinoate + oxidized [NADPH--hemoprotein reductase] + H2O + 2 H(+). It carries out the reaction (5Z,8Z,11Z,14Z)-eicosatetraenoate + reduced [NADPH--hemoprotein reductase] + O2 = (14R,15S)-epoxy-(5Z,8Z,11Z)-eicosatrienoate + oxidized [NADPH--hemoprotein reductase] + H2O + H(+). The enzyme catalyses (5Z,8Z,11Z,14Z)-eicosatetraenoate + reduced [NADPH--hemoprotein reductase] + O2 = (14S,15R)-epoxy-(5Z,8Z,11Z)-eicosatrienoate + oxidized [NADPH--hemoprotein reductase] + H2O + H(+). The catalysed reaction is (5Z,8Z,11Z,14Z,17Z)-eicosapentaenoate + reduced [NADPH--hemoprotein reductase] + O2 = (17R,18S)-epoxy-(5Z,8Z,11Z,14Z)-eicosatetraenoate + oxidized [NADPH--hemoprotein reductase] + H2O + H(+). It catalyses the reaction (4Z,7Z,10Z,13Z,16Z,19Z)-docosahexaenoate + reduced [NADPH--hemoprotein reductase] + O2 = (19R,20S)-epoxy-(4Z,7Z,10Z,13Z,16Z)-docosapentaenoate + oxidized [NADPH--hemoprotein reductase] + H2O + H(+). It carries out the reaction (5S)-hydroperoxy-(6E,8Z,11Z,14Z)-eicosatetraenoate = 5-oxo-(6E,8Z,11Z,14Z)-eicosatetraenoate + H2O. The enzyme catalyses (12S)-hydroperoxy-(5Z,8Z,10E,14Z)-eicosatetraenoate = 12-oxo-(5Z,8Z,10E,14Z)-eicosatetraenoate + H2O. The catalysed reaction is (15S)-hydroperoxy-(5Z,8Z,11Z,13E)-eicosatetraenoate = 15-oxo-(5Z,8Z,11Z,13E)-eicosatetraenoate + H2O. It catalyses the reaction (13S)-hydroperoxy-(9Z,11E)-octadecadienoate = 13-oxo-(9Z,11E)-octadecadienoate + H2O. It carries out the reaction (5Z,8Z,11Z,14Z)-eicosatetraenoate + reduced [NADPH--hemoprotein reductase] + O2 = 13-hydroxy-(5Z,8Z,11Z,14Z)-eicosatetraenoate + oxidized [NADPH--hemoprotein reductase] + H2O + H(+). The enzyme catalyses (5Z,8Z,11Z,14Z)-eicosatetraenoate + reduced [NADPH--hemoprotein reductase] + O2 = 19-hydroxy-(5Z,8Z,11Z,14Z)-eicosatetraenoate + oxidized [NADPH--hemoprotein reductase] + H2O + H(+). The catalysed reaction is (9Z,12Z)-octadecadienoate + reduced [NADPH--hemoprotein reductase] + O2 = 11-hydroxy-(9Z,12Z)-octadecadienoate + oxidized [NADPH--hemoprotein reductase] + H2O + H(+). Its pathway is cofactor metabolism; retinol metabolism. It participates in steroid metabolism; cholesterol metabolism. The protein operates within lipid metabolism; arachidonate metabolism. A cytochrome P450 monooxygenase involved in the metabolism of various endogenous substrates, including fatty acids, steroid hormones and vitamins. Mechanistically, uses molecular oxygen inserting one oxygen atom into a substrate, and reducing the second into a water molecule, with two electrons provided by NADPH via cytochrome P450 reductase (NADPH--hemoprotein reductase). Catalyzes the hydroxylation of carbon-hydrogen bonds. Exhibits high catalytic activity for the formation of hydroxyestrogens from estrone (E1) and 17beta-estradiol (E2), namely 2-hydroxy E1 and E2. Metabolizes cholesterol toward 25-hydroxycholesterol, a physiological regulator of cellular cholesterol homeostasis. May act as a major enzyme for all-trans retinoic acid biosynthesis in the liver. Catalyzes two successive oxidative transformation of all-trans retinol to all-trans retinal and then to the active form all-trans retinoic acid. Primarily catalyzes stereoselective epoxidation of the last double bond of polyunsaturated fatty acids (PUFA), displaying a strong preference for the (R,S) stereoisomer. Catalyzes bisallylic hydroxylation and omega-1 hydroxylation of PUFA. May also participate in eicosanoids metabolism by converting hydroperoxide species into oxo metabolites (lipoxygenase-like reaction, NADPH-independent). Plays a role in the oxidative metabolism of xenobiotics. Catalyzes the N-hydroxylation of heterocyclic amines and the O-deethylation of phenacetin. Metabolizes caffeine via N3-demethylation. This chain is Cytochrome P450 1A2 (Cyp1a2), found in Rattus norvegicus (Rat).